Reading from the N-terminus, the 299-residue chain is Fructose-1,6-bisphosphatase class 1 (299 aa).

Residues Glu-79, Asp-98, Leu-100, and Asp-101 each coordinate Mg(2+). Residues 101 to 104 (DGSS), Tyr-207, and Lys-238 each bind substrate. Glu-244 is a Mg(2+) binding site.

It belongs to the FBPase class 1 family. Homotetramer. Mg(2+) serves as cofactor.

It localises to the cytoplasm. It carries out the reaction beta-D-fructose 1,6-bisphosphate + H2O = beta-D-fructose 6-phosphate + phosphate. It functions in the pathway carbohydrate biosynthesis; gluconeogenesis. In Campylobacter curvus (strain 525.92), this protein is Fructose-1,6-bisphosphatase class 1.